The primary structure comprises 309 residues: Olfactory receptor 2G3 (309 aa).

At methionine 1 to alanine 25 the chain is on the extracellular side. Residue asparagine 5 is glycosylated (N-linked (GlcNAc...) asparagine). A helical transmembrane segment spans residues valine 26–serine 49. Residues tyrosine 50 to threonine 57 lie on the Cytoplasmic side of the membrane. A helical transmembrane segment spans residues proline 58–proline 79. At glutamine 80–glutamine 100 the chain is on the extracellular side. An intrachain disulfide couples cysteine 97 to cysteine 189. A helical membrane pass occupies residues leucine 101 to leucine 120. Over aspartate 121–arginine 139 the chain is Cytoplasmic. The chain crosses the membrane as a helical span at residues leucine 140 to isoleucine 158. The Extracellular portion of the chain corresponds to histidine 159–asparagine 195. The helical transmembrane segment at glutamate 196–glycine 219 threads the bilayer. The Cytoplasmic portion of the chain corresponds to phenylalanine 220–lysine 236. Residues alanine 237–tyrosine 259 traverse the membrane as a helical segment. Over leucine 260–lysine 272 the chain is Extracellular. The chain crosses the membrane as a helical span at residues phenylalanine 273–leucine 292. Topologically, residues arginine 293–leucine 309 are cytoplasmic.

Belongs to the G-protein coupled receptor 1 family.

It is found in the cell membrane. Odorant receptor. In Homo sapiens (Human), this protein is Olfactory receptor 2G3 (OR2G3).